Here is a 109-residue protein sequence, read N- to C-terminus: Tyrosine-protein phosphatase 16 (109 aa).

The region spanning 1–109 (WRMVTEHTST…RIKTQKPIVV (109 aa)) is the Tyrosine-protein phosphatase domain. Asp-81 lines the substrate pocket.

The protein belongs to the protein-tyrosine phosphatase family.

The catalysed reaction is O-phospho-L-tyrosyl-[protein] + H2O = L-tyrosyl-[protein] + phosphate. This is Tyrosine-protein phosphatase 16 (STY-16) from Styela plicata (Wrinkled sea squirt).